Here is a 1781-residue protein sequence, read N- to C-terminus: Signal-induced proliferation-associated 1-like protein 3 (1781 aa).

Disordered stretches follow at residues 45-166 (SMSQ…FLPL) and 239-332 (TELL…EASR). Residues 54-73 (PATATATATATTRPSPTTPA) show a composition bias toward low complexity. Over residues 87–97 (PPKREALREHS) the composition is skewed to basic and acidic residues. S100 bears the Phosphoserine mark. Residues 118-135 (RSIQNGQPPTSTPASSGS) are compositionally biased toward polar residues. The segment covering 137–146 (AFHRLSRRRS) has biased composition (basic residues). S146 is subject to Phosphoserine. Position 401 is a phosphoserine (S401). The Rap-GAP domain maps to 611–828 (LLKLDEQGLC…RTRQEYLKDL (218 aa)). The 77-residue stretch at 966–1042 (DMTLRRNGLG…VKVVIIPPFE (77 aa)) folds into the PDZ domain. 4 disordered regions span residues 1046 to 1112 (PRRG…SLSR), 1124 to 1221 (ESQP…QKPE), 1236 to 1565 (AGSS…GLEP), and 1583 to 1636 (TLPA…RLDP). Polar residues-rich tracts occupy residues 1080–1111 (APWQ…QSLS) and 1157–1166 (PSGSFSTPGS). Over residues 1196 to 1210 (DGTSSGDSSSGGLTS) the composition is skewed to low complexity. Residues 1245–1261 (SRQDAAGKDSPNRHSKG) show a composition bias toward basic and acidic residues. The span at 1266–1281 (SSHSSSNTLSSNASSS) shows a compositional bias: low complexity. Residues 1304-1322 (GGSSDSGIDTTLYTSSPSC) are compositionally biased toward polar residues. At S1364 the chain carries Phosphoserine. At T1387 the chain carries Phosphothreonine. The segment covering 1425 to 1441 (RPSQLAQPSPFQLSASV) has biased composition (polar residues). N6-acetyllysine is present on K1448. Over residues 1509–1518 (TIEDDLKKLI) the composition is skewed to basic and acidic residues. The span at 1532-1547 (GQSPQKGLQRTLSDES) shows a compositional bias: polar residues. Phosphoserine is present on residues S1544 and S1547. Low complexity predominate over residues 1599 to 1609 (PGATPAAGSGF). S1619 and S1622 each carry phosphoserine. Over residues 1625–1635 (DGRDRPLRRLD) the composition is skewed to basic and acidic residues. S1677 is subject to Phosphoserine. The disordered stretch occupies residues 1685-1712 (SPVHSHLSLERGPPTPRTTPTMSEEPPL). Phosphothreonine occurs at positions 1699 and 1703. Residues 1720–1774 (QLEVMLKQLHTDLQKEKQDKVVLQSEVASLRQNNQRLQEESQAASEQLRKFAEIF) are a coiled coil.

The protein localises to the apical cell membrane. Plays a critical role in epithelial cell morphogenesis, polarity, adhesion and cytoskeletal organization in the lens. This Homo sapiens (Human) protein is Signal-induced proliferation-associated 1-like protein 3 (SIPA1L3).